A 95-amino-acid chain; its full sequence is Small ribosomal subunit protein uS17 (95 aa).

Belongs to the universal ribosomal protein uS17 family. In terms of assembly, part of the 30S ribosomal subunit.

Its function is as follows. One of the primary rRNA binding proteins, it binds specifically to the 5'-end of 16S ribosomal RNA. The sequence is that of Small ribosomal subunit protein uS17 from Synechococcus sp. (strain CC9902).